Reading from the N-terminus, the 504-residue chain is Sensor protein FixL (504 aa).

The tract at residues 1-21 is disordered; that stretch reads MTDTPTQALPPKAPQAGPTVP. Over 1–50 the chain is Cytoplasmic; that stretch reads MTDTPTQALPPKAPQAGPTVPGTVRRAVPGSAAAALVIAASHFAALSAFD. A helical transmembrane segment spans residues 51 to 71; sequence PRILLVLLVIVVLASSGGLFA. Residues 72–99 lie on the Periplasmic side of the membrane; the sequence is GLAATAVSALGLALRGLLSGDTVVADWQ. The chain crosses the membrane as a helical span at residues 100–118; that stretch reads SLGLLTIAGAGIAVLGERL. The Cytoplasmic portion of the chain corresponds to 119–504; the sequence is RRTRLDAVAR…TVDEEAMNDA (386 aa). The 68-residue stretch at 135–202 folds into the PAS domain; that stretch reads REAHLSSILD…QHDLYLSRYL (68 aa). Residues 203 to 262 enclose the PAC domain; that stretch reads TTGERRIIGIGRVVTGERKDGATFPMELAVGEMHSVSGRFFTGFIRDLTERQNTEARLQE. Residues 282–497 enclose the Histidine kinase domain; sequence TLAHELNQPL…IFRFTLRTVD (216 aa). At H285 the chain carries Phosphohistidine; by autocatalysis.

The cofactor is heme.

It localises to the cell inner membrane. The enzyme catalyses ATP + protein L-histidine = ADP + protein N-phospho-L-histidine.. Its activity is regulated as follows. The heme moiety regulates the kinase activity. Its function is as follows. Putative oxygen sensor; modulates the activity of FixJ, a transcriptional activator of nitrogen fixation fixK gene. FixL probably acts as a kinase that phosphorylates FixJ. The protein is Sensor protein FixL (fixL) of Azorhizobium caulinodans (strain ATCC 43989 / DSM 5975 / JCM 20966 / LMG 6465 / NBRC 14845 / NCIMB 13405 / ORS 571).